The sequence spans 930 residues: Short transient receptor potential channel 6 (930 aa).

Positions methionine 1–glutamate 27 are disordered. At methionine 1–glycine 437 the chain is on the cytoplasmic side. ANK repeat units lie at residues isoleucine 96–valine 125, methionine 131–valine 160, aspartate 162–glycine 188, and histidine 217–arginine 246. A helical membrane pass occupies residues proline 438–methionine 458. Topologically, residues asparagine 459 to lysine 486 are extracellular. Residues threonine 487–alanine 507 traverse the membrane as a helical segment. The Cytoplasmic portion of the chain corresponds to glutamate 508–tyrosine 520. A helical transmembrane segment spans residues leucine 521 to isoleucine 541. Over alanine 542–glutamine 591 the chain is Extracellular. N-linked (GlcNAc...) asparagine glycosylation is present at asparagine 560. Residues isoleucine 592–isoleucine 612 form a helical membrane-spanning segment. The Cytoplasmic segment spans residues leucine 613–lysine 635. The chain crosses the membrane as a helical span at residues phenylalanine 636–serine 656. Residues tyrosine 657–valine 705 lie on the Extracellular side of the membrane. The helical transmembrane segment at leucine 706–isoleucine 726 threads the bilayer. Residues asparagine 727–arginine 930 lie on the Cytoplasmic side of the membrane. At serine 814 the chain carries Phosphoserine.

The protein belongs to the transient receptor (TC 1.A.4) family. STrpC subfamily. TRPC6 sub-subfamily. In terms of assembly, homodimer; forms channel complex. Interacts with MX1 and RNF24. In terms of processing, phosphorylated by FYN, leading to an increase of TRPC6 channel activity. Post-translationally, N-glycosylated. In terms of tissue distribution, lung and brain.

It is found in the cell membrane. The enzyme catalyses Ca(2+)(in) = Ca(2+)(out). Its function is as follows. Forms a receptor-activated non-selective calcium permeant cation channel. Probably is operated by a phosphatidylinositol second messenger system activated by receptor tyrosine kinases or G-protein coupled receptors. Activated by diacylglycerol (DAG) in a membrane-delimited fashion, independently of protein kinase C. Seems not to be activated by intracellular calcium store depletion. The protein is Short transient receptor potential channel 6 of Mus musculus (Mouse).